Consider the following 440-residue polypeptide: Diels-Alderase mycB (440 aa).

The N-terminal stretch at 1-18 (MGYLVKLACGLLLPLATA) is a signal peptide. N-linked (GlcNAc...) asparagine glycosylation is found at Asn-80, Asn-155, and Asn-332.

It belongs to the Diels-Alderase family.

The enzyme catalyses (5S)-5-(2-methylpropyl)-3-[(2E,6R,8E,10E,12E)-6,8,10,12-tetramethyltetradeca-2,8,10,12-tetraenoyl]-2,5-dihydro-1H-pyrrol-2-one = (5S)-3-[(1S,2R,4aR,6R,8aS)-2-(but-2-en-2-yl)-3,4a,6-trimethyl-1,2,4a,5,6,7,8,8a-octahydronaphthalene-1-carbonyl]-5-(2-methylpropyl)-2,5-dihydro-1H-pyrrol-2-one. It carries out the reaction (5Z)-5-(2-methylpropylidene)-3-[(2E,6R,8E,10E,12E)-6,8,10,12-tetramethyltetradeca-2,8,10,12-tetraenoyl]-2,5-dihydro-1H-pyrrol-2-one = myceliothermophin E. It participates in mycotoxin biosynthesis. In terms of biological role, diels-Alderase; part of the gene cluster that mediates the biosynthesis of myceliothermophins, mycotoxins that contain a trans-fused decalin ring system connected to a conjugated 3-pyrrolin-2-one moiety and that have potential anti-tumor properties. The polyketide synthase module (PKS) of the PKS-NRPS mycA is responsible for the synthesis of the octaketide backbone. The downstream nonribosomal peptide synthetase (NRPS) module then amidates the carboxyl end of the octaketide with a leucine. A reductase-like domain (R) at the C-terminus catalyzes the reductive release of the polyketide-amino acid intermediate. Because mycA lacks a designated enoylreductase (ER) domain, the required activity is provided the enoyl reductase mycC. Following mycA-catalyzed construction and release of aminoacyl polyketide aldehyde, Knoevenagel condensation yields the expected ketone. This C18 keto acyclic precursor is the substrate of the Diels-Alderase mycB, that catalyzes the Diels-Alder cycloaddition to produce myceliothermophin E. A yet unknown oxygenase involved in the production of myceliothermophin A, via substitution with a hydroxyl group at the C21, has still to be identified. The protein is Diels-Alderase mycB of Thermothelomyces thermophilus (strain ATCC 42464 / BCRC 31852 / DSM 1799) (Sporotrichum thermophile).